The chain runs to 59 residues: Cecropin-B1 (59 aa).

Positions Met1–Ala23 are cleaved as a signal peptide. Leu57 carries the post-translational modification Leucine amide.

The protein belongs to the cecropin family.

It is found in the secreted. Its function is as follows. Cecropins have lytic and antibacterial activity against several Gram-positive and Gram-negative bacteria. This chain is Cecropin-B1 (CECB1), found in Culex pipiens pipiens (Northern house mosquito).